The chain runs to 312 residues: Acetyl-coenzyme A carboxylase carboxyl transferase subunit beta (312 aa).

Residues 1-52 (MEMDTAVENPAVEKNGQPTPSSTSTATDAAPTPNAPNRPAPNTAGNRKRGVP) are disordered. Positions 18–32 (PTPSSTSTATDAAPT) are enriched in low complexity. The CoA carboxyltransferase N-terminal domain occupies 55 to 312 (VWRKCDSCGA…IATAIDYCGK (258 aa)). Residues Cys-59, Cys-62, Cys-78, and Cys-81 each coordinate Zn(2+). The segment at 59-81 (CDSCGASLFYKEVQQRLNVCPQC) adopts a C4-type zinc-finger fold.

Belongs to the AccD/PCCB family. Acetyl-CoA carboxylase is a heterohexamer composed of biotin carboxyl carrier protein (AccB), biotin carboxylase (AccC) and two subunits each of ACCase subunit alpha (AccA) and ACCase subunit beta (AccD). Requires Zn(2+) as cofactor.

It localises to the cytoplasm. It carries out the reaction N(6)-carboxybiotinyl-L-lysyl-[protein] + acetyl-CoA = N(6)-biotinyl-L-lysyl-[protein] + malonyl-CoA. The protein operates within lipid metabolism; malonyl-CoA biosynthesis; malonyl-CoA from acetyl-CoA: step 1/1. In terms of biological role, component of the acetyl coenzyme A carboxylase (ACC) complex. Biotin carboxylase (BC) catalyzes the carboxylation of biotin on its carrier protein (BCCP) and then the CO(2) group is transferred by the transcarboxylase to acetyl-CoA to form malonyl-CoA. The protein is Acetyl-coenzyme A carboxylase carboxyl transferase subunit beta of Rhodopirellula baltica (strain DSM 10527 / NCIMB 13988 / SH1).